Consider the following 1602-residue polypeptide: MAP kinase-activating death domain protein (1602 aa).

The region spanning 13-267 (YLVIVGARHP…VPVSGQKRVD (255 aa)) is the uDENN domain. Basic and acidic residues predominate over residues 105–121 (PKEKAEGGAGPRGKEGA). A disordered region spans residues 105–167 (PKEKAEGGAG…GKRRAKAGNR (63 aa)). Low complexity predominate over residues 126–137 (ASEEAATESSES). Over residues 138–156 (GSTLQPPSADSTPDVNQSP) the composition is skewed to polar residues. Ser155 carries the post-translational modification Phosphoserine. Basic residues predominate over residues 157–166 (RGKRRAKAGN). In terms of domain architecture, cDENN spans 288 to 428 (RFTLVDFPLH…ESLELKKHLK (141 aa)). Positions 430 to 564 (ALASMSLNTQ…LNPSNYAFQR (135 aa)) constitute a dDENN domain. Disordered regions lie at residues 603–635 (ALSVPPERDSESDPTDDSGSDSMDYDDSSSSYS) and 676–840 (QPQK…NSTE). Acidic residues predominate over residues 614-629 (SDPTDDSGSDSMDYDD). 2 positions are modified to phosphoserine: Ser688 and Ser691. The segment covering 688–698 (SENSQENLPLR) has biased composition (polar residues). Residues 699–711 (SSSSTTASSSPST) show a composition bias toward low complexity. Ser778 carries the post-translational modification Phosphoserine. Residues 789-803 (ESYTPRFSQHASGSR) are compositionally biased toward polar residues. A phosphoserine mark is found at Ser812, Ser817, and Ser819. The segment covering 826 to 839 (RASSPNSTVSNNST) has biased composition (low complexity). A phosphoserine mark is found at Ser857, Ser861, Ser895, Ser900, and Ser909. Disordered stretches follow at residues 870–920 (KGAR…SSEN), 1030–1089 (KEPD…DTRS), and 1113–1231 (TEEK…RSSE). The segment covering 911–920 (QGRSSNSSEN) has biased composition (polar residues). At Ser1038 the chain carries Phosphoserine. Residues Thr1040 and Thr1045 each carry the phosphothreonine modification. A Phosphoserine modification is found at Ser1089. Polar residues predominate over residues 1119–1134 (QISADSGVSLASASQR). A compositionally biased stretch (low complexity) spans 1151-1162 (SSSQDSEVSNSS). Residues 1191-1209 (SRATLSDSEIETNSATSTI) show a composition bias toward polar residues. Thr1194 bears the Phosphothreonine mark. Residues Ser1196 and Ser1225 each carry the phosphoserine modification. The Death domain occupies 1295-1370 (GMDQGPQEMI…GLVYSQQINE (76 aa)).

It belongs to the MADD family. Interacts (via death domain) with TNFRSF1A (via death domain). Interacts with PIDD1. Interacts with YWHAZ. Interacts (via death domain) with KIF1B; links the motor KIF1B to Rab3-carrying vesicles in anterograde synaptic vesicle transport. Interacts with KIF1A. Interacts (via uDENN domain) with RAB3A, RAB3B, RAB3C and RAB3D; the GTP-bound form of the Rab proteins is preferred for interaction. As to expression, expressed in all tissues examined with the highest expression in brain.

It is found in the cell membrane. It localises to the cytoplasm. The protein resides in the cell projection. The protein localises to the axon. In terms of biological role, guanyl-nucleotide exchange factor that regulates small GTPases of the Rab family. Converts GDP-bound inactive form of RAB27A and RAB27B to the GTP-bound active forms. Converts GDP-bound inactive form of RAB3A, RAB3C and RAB3D to the GTP-bound active forms, GTPases involved in synaptic vesicle exocytosis and vesicle secretion. Plays a role in synaptic vesicle formation and in vesicle trafficking at the neuromuscular junction. Involved in up-regulating a post-docking step of synaptic exocytosis in central synapses. Probably by binding to the motor proteins KIF1B and KIF1A, mediates motor-dependent transport of GTP-RAB3A-positive vesicles to the presynaptic nerve terminals. Plays a role in TNFA-mediated activation of the MAPK pathway, including ERK1/2. May link TNFRSF1A with MAP kinase activation. May be involved in the regulation of TNFA-induced apoptosis. In Rattus norvegicus (Rat), this protein is MAP kinase-activating death domain protein.